Consider the following 324-residue polypeptide: Zinc metalloproteinase leucurolysin-B (324 aa).

One can recognise a Peptidase M12B domain in the interval 1 to 119 (DTVLLNRISH…LNPQCILNEP (119 aa)). Asp11 lines the Ca(2+) pocket. 3 cysteine pairs are disulfide-bonded: Cys34–Cys114, Cys74–Cys98, and Cys76–Cys81. A Zn(2+)-binding site is contributed by His59. Glu60 is an active-site residue. Positions 63 and 69 each coordinate Zn(2+). A glycan (N-linked (GlcNAc...) asparagine) is linked at Asn97. Positions 114, 117, 129, 132, 134, 136, 139, and 142 each coordinate Ca(2+). The 87-residue stretch at 127 to 213 (PPVCGNELLE…QCPTDDFKRN (87 aa)) folds into the Disintegrin domain. Intrachain disulfides connect Cys130–Cys159, Cys141–Cys154, Cys143–Cys149, Cys153–Cys176, Cys167–Cys173, Cys172–Cys198, Cys185–Cys205, Cys192–Cys224, Cys217–Cys229, Cys236–Cys286, Cys251–Cys295, Cys264–Cys274, and Cys281–Cys315. A D/ECD-tripeptide motif is present at residues 191–193 (ECD). N-linked (GlcNAc...) asparagine glycans are attached at residues Asn296 and Asn305.

It belongs to the venom metalloproteinase (M12B) family. P-III subfamily. P-IIIa sub-subfamily. In terms of assembly, monomer. Zn(2+) serves as cofactor. Post-translationally, N-glycosylated. The N-terminus is blocked. As to expression, expressed by the venom gland.

It localises to the secreted. With respect to regulation, inhibited by EDTA, but not by PMSF. Pre-incubation with 2 mM DTT completely abolishes activity. In terms of biological role, snake venom zinc metalloproteinase that acts as a potent hemorrhagic toxin. Hydrolyzes the insulin B chain at the 14-Ala-|-Leu-15 bond but not the 16-Tyr-|-Leu-17 bond. Degrades the alpha-chain of fibrin and hydrolyzes the Aalpha-chain of fibrinogen (FGA) while leaving the beta and gamma chains unaffected. Degrades type-I collagen and its gelatin. Degrades the alpha-1 chain of type-IV collagen and its gelatin but not the alpha-2 chain. Degrades plasma fibronectin, plasma vitronectin and basement membrane enactin. It inhibits collagen-induced platelet aggregation. The sequence is that of Zinc metalloproteinase leucurolysin-B from Bothrops leucurus (Whitetail lancehead).